The chain runs to 133 residues: Agglutinin alpha chain (133 aa).

The Jacalin-type lectin domain maps to 1-133 (GKAFDDGAFT…LDYFSMYLSL (133 aa)). The stretch at residues 7-64 (GAFTGIREINLSYNKETAIGDFQVVYDLNGSPYVGQNHKSFITGFTPVKISLDFPSEY) is a repeat. A glycan (N-linked (GlcNAc...) asparagine; when associated with variant T-45; partial) is linked at Asn-43. The igA-binding stretch occupies residues 68–89 (VSGYTGNVSGYVVVRSLTFKTN). A glycan (N-linked (GlcNAc...) asparagine; partial) is linked at Asn-74. The segment at residues 76–130 (SGYVVVRSLTFKTNKKTYGPYGVTSGTPFNLPIENGLIVGFKGSIGYWLDYFSMY) is a repeat.

This sequence belongs to the jacalin lectin family. As to quaternary structure, tetramer of four alpha chains associated with two or four beta chains.

D-galactose-specific lectin, binds the T-antigen structure Gal-beta1,3-GalNAc (Thomsen-Friedenreich-antigen-specific lectin). Potent and selective stimulant of distinct T- and B-cell functions. Shows a unique ability to specifically recognize IgA-1 from human serum. This Artocarpus integer (Jack fruit) protein is Agglutinin alpha chain.